A 391-amino-acid chain; its full sequence is Protein CapJ (391 aa).

It functions in the pathway capsule biogenesis; capsule polysaccharide biosynthesis. Functionally, required for the biosynthesis of type 1 capsular polysaccharide. This Staphylococcus aureus protein is Protein CapJ (capJ).